A 1430-amino-acid polypeptide reads, in one-letter code: Transport and Golgi organization protein 1 (1430 aa).

The N-terminal stretch at 1-34 (MRLTNEKATMQPQLSDLALVLGLLICCLPTLTWA) is a signal peptide. Topologically, residues 35-796 (ATLSDKRLCA…ADKLVDHSQL (762 aa)) are extracellular. The region spanning 50–112 (QIISMGIAKI…NKDFIMEKKI (63 aa)) is the SH3 domain. Disordered regions lie at residues 253-272 (QEEP…PPLP), 284-303 (DFDY…SQDN), 318-362 (ESIE…SLPT), 445-524 (SDAE…DQQK), and 568-673 (EEAE…TDNH). A compositionally biased stretch (acidic residues) spans 284–296 (DFDYGDDETDDDS). Basic and acidic residues-rich tracts occupy residues 331 to 357 (KKTD…KQED), 497 to 524 (LQEE…DQQK), and 568 to 588 (EEAE…RSSE). A coiled-coil region spans residues 494–620 (YKQLQEEQEK…QSNEIVDNNN (127 aa)). The segment covering 594 to 621 (LSVQEANMQQLNDSVDSQSNEIVDNNNR) has biased composition (polar residues). The segment covering 640-651 (HPSTASHTTPTP) has biased composition (low complexity). The chain crosses the membrane as a helical span at residues 797-817 (LLCVVIAAISSLFFMFAYYCF). Residues 818–1430 (CNSSQEGALL…SATSRPYSEV (613 aa)) lie on the Cytoplasmic side of the membrane. Serine 865 and serine 868 each carry phosphoserine. A coiled-coil region spans residues 869 to 1245 (NDMVADLKKQ…SLRRKLTTMA (377 aa)). The segment covering 1105-1114 (SQLQQSSQDV) has biased composition (low complexity). 2 disordered regions span residues 1105–1126 (SQLQ…QSER) and 1312–1430 (LPPT…YSEV). The segment covering 1115–1126 (EQLKQDFNQSER) has biased composition (basic and acidic residues). Residues 1321 to 1334 (RPPPLGRMRSPPPS) are compositionally biased toward pro residues. Basic and acidic residues predominate over residues 1336-1346 (RGDRDRERYSD). Phosphoserine is present on residues serine 1345 and serine 1348. Over residues 1348–1361 (SDYDDYDDDEEDDR) the composition is skewed to acidic residues. Over residues 1364–1380 (DRRRRHSGSWGRRHRGS) the composition is skewed to basic residues. The span at 1387–1402 (TYRSLSPSDSRYNYND) shows a compositional bias: polar residues. A phosphoserine mark is found at serine 1390 and serine 1392. The span at 1408–1417 (SPPPSPPPVP) shows a compositional bias: pro residues. Positions 1420 to 1430 (RSATSRPYSEV) are enriched in polar residues.

Belongs to the MIA/OTOR family. Tango1 subfamily.

It is found in the golgi apparatus membrane. The protein resides in the golgi apparatus. It localises to the trans-Golgi network. Required for protein secretion. May participate in cargo loading by binding to COPII coat subunits and guiding SH3-bound proteins into a growing carrier. At basal transitional ER sites in follicle epithelial cells, mediates the exit of basal membrane protein such as vkg, LanB1 and Trol, from the endoplasmic reticulum (ER) to basal Golgi clusters. This Drosophila melanogaster (Fruit fly) protein is Transport and Golgi organization protein 1.